Reading from the N-terminus, the 418-residue chain is Glutamyl-tRNA(Gln) amidotransferase subunit D (418 aa).

The region spanning 74 to 405 is the Asparaginase/glutaminase domain; it reads KNISILSTGG…KEAKELMSKN (332 aa). Catalysis depends on residues T84, T160, D161, and K237.

Belongs to the asparaginase 1 family. GatD subfamily. In terms of assembly, heterodimer of GatD and GatE.

It carries out the reaction L-glutamyl-tRNA(Gln) + L-glutamine + ATP + H2O = L-glutaminyl-tRNA(Gln) + L-glutamate + ADP + phosphate + H(+). Its function is as follows. Allows the formation of correctly charged Gln-tRNA(Gln) through the transamidation of misacylated Glu-tRNA(Gln) in organisms which lack glutaminyl-tRNA synthetase. The reaction takes place in the presence of glutamine and ATP through an activated gamma-phospho-Glu-tRNA(Gln). The GatDE system is specific for glutamate and does not act on aspartate. This chain is Glutamyl-tRNA(Gln) amidotransferase subunit D, found in Methanococcus maripaludis (strain DSM 14266 / JCM 13030 / NBRC 101832 / S2 / LL).